A 141-amino-acid polypeptide reads, in one-letter code: Large ribosomal subunit protein uL11 (141 aa).

This sequence belongs to the universal ribosomal protein uL11 family. Part of the ribosomal stalk of the 50S ribosomal subunit. Interacts with L10 and the large rRNA to form the base of the stalk. L10 forms an elongated spine to which L12 dimers bind in a sequential fashion forming a multimeric L10(L12)X complex. In terms of processing, one or more lysine residues are methylated.

Forms part of the ribosomal stalk which helps the ribosome interact with GTP-bound translation factors. The protein is Large ribosomal subunit protein uL11 of Clostridium tetani (strain Massachusetts / E88).